Reading from the N-terminus, the 311-residue chain is 4-hydroxy-3-methylbut-2-enyl diphosphate reductase (311 aa).

Residue Cys-12 coordinates [4Fe-4S] cluster. (2E)-4-hydroxy-3-methylbut-2-enyl diphosphate is bound by residues His-43 and His-81. Dimethylallyl diphosphate-binding residues include His-43 and His-81. Isopentenyl diphosphate is bound by residues His-43 and His-81. [4Fe-4S] cluster is bound at residue Cys-103. His-131 lines the (2E)-4-hydroxy-3-methylbut-2-enyl diphosphate pocket. Residue His-131 participates in dimethylallyl diphosphate binding. Position 131 (His-131) interacts with isopentenyl diphosphate. The active-site Proton donor is the Glu-133. A (2E)-4-hydroxy-3-methylbut-2-enyl diphosphate-binding site is contributed by Thr-170. Residue Cys-198 coordinates [4Fe-4S] cluster. (2E)-4-hydroxy-3-methylbut-2-enyl diphosphate is bound by residues Ser-226, Asn-228, and Ser-271. Dimethylallyl diphosphate is bound by residues Ser-226, Asn-228, and Ser-271. The isopentenyl diphosphate site is built by Ser-226, Asn-228, and Ser-271.

This sequence belongs to the IspH family. [4Fe-4S] cluster serves as cofactor.

It carries out the reaction isopentenyl diphosphate + 2 oxidized [2Fe-2S]-[ferredoxin] + H2O = (2E)-4-hydroxy-3-methylbut-2-enyl diphosphate + 2 reduced [2Fe-2S]-[ferredoxin] + 2 H(+). The catalysed reaction is dimethylallyl diphosphate + 2 oxidized [2Fe-2S]-[ferredoxin] + H2O = (2E)-4-hydroxy-3-methylbut-2-enyl diphosphate + 2 reduced [2Fe-2S]-[ferredoxin] + 2 H(+). It participates in isoprenoid biosynthesis; dimethylallyl diphosphate biosynthesis; dimethylallyl diphosphate from (2E)-4-hydroxy-3-methylbutenyl diphosphate: step 1/1. Its pathway is isoprenoid biosynthesis; isopentenyl diphosphate biosynthesis via DXP pathway; isopentenyl diphosphate from 1-deoxy-D-xylulose 5-phosphate: step 6/6. Its function is as follows. Catalyzes the conversion of 1-hydroxy-2-methyl-2-(E)-butenyl 4-diphosphate (HMBPP) into a mixture of isopentenyl diphosphate (IPP) and dimethylallyl diphosphate (DMAPP). Acts in the terminal step of the DOXP/MEP pathway for isoprenoid precursor biosynthesis. The polypeptide is 4-hydroxy-3-methylbut-2-enyl diphosphate reductase (Brevibacillus brevis (strain 47 / JCM 6285 / NBRC 100599)).